The sequence spans 349 residues: tRNA pseudouridine synthase D (349 aa).

Substrate is bound at residue phenylalanine 27. Aspartate 80 (nucleophile) is an active-site residue. Residue asparagine 129 participates in substrate binding. One can recognise a TRUD domain in the interval glycine 155–leucine 303. Phenylalanine 329 contacts substrate.

This sequence belongs to the pseudouridine synthase TruD family.

It carries out the reaction uridine(13) in tRNA = pseudouridine(13) in tRNA. In terms of biological role, responsible for synthesis of pseudouridine from uracil-13 in transfer RNAs. This Klebsiella pneumoniae (strain 342) protein is tRNA pseudouridine synthase D.